A 546-amino-acid polypeptide reads, in one-letter code: 2-isopropylmalate synthase (546 aa).

Residues 8–271 (ILIFDTTLRD…NSFFKRNPDS (264 aa)) form the Pyruvate carboxyltransferase domain. Mn(2+)-binding residues include Asp-17, His-208, His-210, and Asn-244. The regulatory domain stretch occupies residues 408–546 (QLSLVQVSCG…NNTYISNPAN (139 aa)).

This sequence belongs to the alpha-IPM synthase/homocitrate synthase family. LeuA type 1 subfamily. Homodimer. Requires Mn(2+) as cofactor.

It localises to the cytoplasm. The enzyme catalyses 3-methyl-2-oxobutanoate + acetyl-CoA + H2O = (2S)-2-isopropylmalate + CoA + H(+). It participates in amino-acid biosynthesis; L-leucine biosynthesis; L-leucine from 3-methyl-2-oxobutanoate: step 1/4. Catalyzes the condensation of the acetyl group of acetyl-CoA with 3-methyl-2-oxobutanoate (2-ketoisovalerate) to form 3-carboxy-3-hydroxy-4-methylpentanoate (2-isopropylmalate). This Prochlorococcus marinus (strain MIT 9301) protein is 2-isopropylmalate synthase.